The sequence spans 758 residues: MDVNPTLLFLKVPAQNAISTTFPYTGDPPYSHGTGTGYTMDTVNRTHQYSEKGRWTTNTETGAPQLNPIDGPLPEDNEPSGYAQTDCVLEAMAFLEESHPGLFENSCLETMEVVQQTRMDKLTQGRQTYDWTLNRNQPAATALANTIEVFRSNGLTANESGRLIDFLKDVMESMDKEEMEITTHFQRKRRVRDNMTKKMVTQRTIGKKKQRLTKKSYLIRALTLNTMTKDAERGKLKRRAIATPGMQIRGFVHFVEALARSICEKLEQSGLPVGGNEKKAKLANVVRKMMTNSQDTELSFTVTGDNTKWNENQNPRIFLAMITYITRNQPEWFRNVLSIAPIMFSNKMARLGKGYMFESKSMKLRTQIPAEMLANIDLKYFNESTRKKIEKIRPLLVEGTASLSPGMMMGMFNMLSTVLGVSILNLGQKRYTKTTYWWDGLQSSDDFALIVNAPNHEGIQAGVDRFYRTCKLVGINMSKKKSYINRTGTFEFTSFFYRYGFVANFSMELPSFGVSGINESADMSIGVTVIKNNMINNDLGPATAQMALQLFIKDYRYTYRCHRGDTQIQTRRSFELKKLWEQTRSKAGLLVSDGGPNLYNIRNLHIPEVGLKWELMDEDYQGRLCNPLNPFVSHKEVESVNNAVVMPAHGPAKSMEYDAVATTHSWIPKRNRSILNTSQRGILEDEQMYQKCCTLFEKFFPSSSYRRPVGISSMMEAMVSRARIDARIDFESGRIKKEEFAEILKICSTIEELGRQGK.

The tract at residues 53–82 (GRWTTNTETGAPQLNPIDGPLPEDNEPSGY) is disordered. The segment covering 55–64 (WTTNTETGAP) has biased composition (polar residues). 2 short sequence motifs (nuclear localization signal) span residues 187-195 (RKRRVRDNM) and 203-216 (RTIGKKKQRLTKKS). The interval 249–256 (RGFVHFVE) is promoter-binding site. In terms of domain architecture, RdRp catalytic spans 286–483 (VRKMMTNSQD…GINMSKKKSY (198 aa)).

The protein belongs to the influenza viruses polymerase PB1 family. In terms of assembly, influenza RNA polymerase is composed of three subunits: PB1, PB2 and PA. Interacts (via N-terminus) with PA (via C-terminus). Interacts (via C-terminus) with PB2 (via N-terminus); this interaction is essential for transcription initiation. Phosphorylated by host PRKCA.

Its subcellular location is the host nucleus. It is found in the host cytoplasm. The catalysed reaction is RNA(n) + a ribonucleoside 5'-triphosphate = RNA(n+1) + diphosphate. Its function is as follows. RNA-dependent RNA polymerase which is responsible for replication and transcription of virus RNA segments. The transcription of viral mRNAs occurs by a unique mechanism called cap-snatching. 5' methylated caps of cellular mRNAs are cleaved after 10-13 nucleotides by PA. In turn, these short capped RNAs are used as primers by PB1 for transcription of viral mRNAs. During virus replication, PB1 initiates RNA synthesis and copy vRNA into complementary RNA (cRNA) which in turn serves as a template for the production of more vRNAs. This is RNA-directed RNA polymerase catalytic subunit from Aves (Cat).